A 307-amino-acid chain; its full sequence is Mitochondrial 2-oxodicarboxylate carrier 2 (307 aa).

6 helical membrane-spanning segments follow: residues 10 to 30 (LPFI…LTVM), 76 to 95 (SRLY…KRAT), 122 to 142 (IAAG…FELI), 171 to 191 (GLYK…GGYF), 215 to 235 (LIAG…FDVV), and 280 to 300 (CRLA…MNFF). Solcar repeat units lie at residues 10 to 106 (LPFI…YQKI), 116 to 200 (TTQK…VRNS), and 209 to 299 (QKTR…MMNF).

Belongs to the mitochondrial carrier (TC 2.A.29) family.

The protein localises to the mitochondrion inner membrane. Transports C5-C7 oxodicarboxylates across the inner membranes of mitochondria. Can transport 2-oxoadipate, 2-oxoglutarate, adipate, glutarate, 2-oxopimelate, oxaloacetate, citrate and malate. The main physiological role is probably to supply 2-oxoadipate and 2-oxoglutarate from the mitochondrial matrix to the cytosol where they are used in the biosynthesis of lysine and glutamate, respectively, and in lysine catabolism. The polypeptide is Mitochondrial 2-oxodicarboxylate carrier 2 (ODC2) (Saccharomyces cerevisiae (strain ATCC 204508 / S288c) (Baker's yeast)).